Consider the following 132-residue polypeptide: MVMTDPIADLLTRIRNANMVRHEKLEVPASKIKREIAEILKREGFIRDVEYVEDSKQGIIRMFLKYGQNNERVITGLKRISKPGLRVYAKSNEVPRVLNGLGIAIISTSQGVLSDKEARAKQAGGEVLAYVW.

Belongs to the universal ribosomal protein uS8 family. Part of the 30S ribosomal subunit. Contacts proteins S5 and S12.

Functionally, one of the primary rRNA binding proteins, it binds directly to 16S rRNA central domain where it helps coordinate assembly of the platform of the 30S subunit. In Bacillus pumilus (strain SAFR-032), this protein is Small ribosomal subunit protein uS8.